A 439-amino-acid chain; its full sequence is ATP-dependent protease ATPase subunit HslU (439 aa).

Residues I17, 59-64 (GVGKTE), D251, E317, and R389 contribute to the ATP site.

This sequence belongs to the ClpX chaperone family. HslU subfamily. As to quaternary structure, a double ring-shaped homohexamer of HslV is capped on each side by a ring-shaped HslU homohexamer. The assembly of the HslU/HslV complex is dependent on binding of ATP.

The protein resides in the cytoplasm. Its function is as follows. ATPase subunit of a proteasome-like degradation complex; this subunit has chaperone activity. The binding of ATP and its subsequent hydrolysis by HslU are essential for unfolding of protein substrates subsequently hydrolyzed by HslV. HslU recognizes the N-terminal part of its protein substrates and unfolds these before they are guided to HslV for hydrolysis. The chain is ATP-dependent protease ATPase subunit HslU from Campylobacter jejuni subsp. jejuni serotype O:2 (strain ATCC 700819 / NCTC 11168).